Reading from the N-terminus, the 477-residue chain is MTGQSLWDVSEANVEDGEIRINVGGFKRRLRSHTLLRFPETRLGRLLLCHSREAILELCDDYDDVQREFYFDRNPELFPYVLHFYHTGKLHVMAELCVFSFSQEIEYWGINEFFIDSCCSYSYHGRKVEPEQEKWDEQSDQESTTSSFDEILAFYNDASKFDGQPLGNFRRQLWLALDNPGYSVLSRVFSILSILVVMGSIITMCLNSLPDFQIPDSQGNPGEDPRFEIVEHFGIAWFTFELVARFAVAPDFLKFFKNALNLIDLMSIVPFYITLVVNLVVESTPTLANLGRVAQVLRLMRIFRILKLARHSTGLRSLGATLKYSYKEVGLLLLYLSVGISIFSVVAYTIEKEENEGLATIPACWWWATVSMTTVGYGDVVPGTTAGKLTASACILAGILVVVLPITLIFNKFSHFYRRQKQLESAMRSCDFGDGMKEVPSVNLRDYYAHKVKSLMASLTNMSRSSPSELSLNDSLR.

Residues M1–V184 are Cytoplasmic-facing. A helical transmembrane segment spans residues L185 to L206. Over N207 to P225 the chain is Extracellular. Residues R226–V248 form a helical membrane-spanning segment. Residues A249 to A259 are Cytoplasmic-facing. A helical transmembrane segment spans residues L260–V280. The Extracellular segment spans residues V281–L290. A helical; Voltage-sensor transmembrane segment spans residues G291–H311. Over S312 to Y326 the chain is Cytoplasmic. A helical transmembrane segment spans residues K327 to Y348. The Extracellular portion of the chain corresponds to T349 to I361. Positions P362–T373 form an intramembrane region, helical. Residues T374 to D379 carry the Selectivity filter motif. The stretch at T374 to V381 is an intramembrane region. The Extracellular segment spans residues P382 to K388. Residues L389 to Y417 form a helical membrane-spanning segment. Residues R418–R477 lie on the Cytoplasmic side of the membrane.

This sequence belongs to the potassium channel family. S (TC 1.A.1.2) subfamily. Kv9.2/KCNS2 sub-subfamily. Heterotetramer with KCNB1 and KCNB2. Does not form homomultimers.

It is found in the cell membrane. Functionally, potassium channel regulatory subunit that modulate the delayed rectifier voltage-gated potassium channel activity of KCNB1 and KCNB2 by altering their kinetics, expression levels, and shifting the half-inactivation potential to more polarized values. While it does not form functional channels on its own, it can form functional heterotetrameric channels with KCNB1 and KCNB2. Each regulatory subunit has unique regulatory properties that can lead to extensive inhibition, significant changes in kinetics, and/or substantial shifts in the voltage dependencies of the inactivation process. The polypeptide is Delayed-rectifier potassium channel regulatory subunit KCNS2 (Homo sapiens (Human)).